The chain runs to 80 residues: MAERSQNLQDLFLNTVRKQKISLTIFLINGVKLTGVVTSFDNFCVLLRRDGHSQLVYKHAISTIMPGQPMQMFESEEGAA.

Residues 10-70 enclose the Sm domain; the sequence is DLFLNTVRKQ…ISTIMPGQPM (61 aa).

This sequence belongs to the Hfq family. In terms of assembly, homohexamer.

Its function is as follows. RNA chaperone that binds small regulatory RNA (sRNAs) and mRNAs to facilitate mRNA translational regulation in response to envelope stress, environmental stress and changes in metabolite concentrations. Also binds with high specificity to tRNAs. The sequence is that of RNA-binding protein Hfq from Agrobacterium fabrum (strain C58 / ATCC 33970) (Agrobacterium tumefaciens (strain C58)).